Consider the following 299-residue polypeptide: Diaminopimelate epimerase (299 aa).

Residues Asn11 and Asn63 each coordinate substrate. The active-site Proton donor is the Cys72. Residues 73 to 74 (GN), Asn211, and 229 to 230 (ER) contribute to the substrate site. Cys238 functions as the Proton acceptor in the catalytic mechanism. 239–240 (GT) contributes to the substrate binding site.

The protein belongs to the diaminopimelate epimerase family. As to quaternary structure, homodimer.

The protein localises to the cytoplasm. It catalyses the reaction (2S,6S)-2,6-diaminopimelate = meso-2,6-diaminopimelate. It participates in amino-acid biosynthesis; L-lysine biosynthesis via DAP pathway; DL-2,6-diaminopimelate from LL-2,6-diaminopimelate: step 1/1. In terms of biological role, catalyzes the stereoinversion of LL-2,6-diaminopimelate (L,L-DAP) to meso-diaminopimelate (meso-DAP), a precursor of L-lysine and an essential component of the bacterial peptidoglycan. The chain is Diaminopimelate epimerase from Natranaerobius thermophilus (strain ATCC BAA-1301 / DSM 18059 / JW/NM-WN-LF).